The chain runs to 268 residues: MNDPNFLHAIILGIVEGVSEFLPISSTGHLIIVGELLGFSSVPGKVFEVVIQLGAILAICVLYSGRLTRVLRDAPRDAGARNFIGAIFVALIPAGLLGVLYHDFILEVLFTPYVVCAALITGGIAIVVVERLHLEPRITSVEAFSMRTALKIGLFQCIALVPGVSRSGATILGALLVGVERKTAAEFSFFLAIPVMLGASVVSLRDTWQLISMDDLHLIAAGFIAAFISALLVVKWLVSFVSSHGFTVFGWYRILFGSLLLIYFSLSS.

Transmembrane regions (helical) follow at residues 42-62 (VPGK…ICVL), 86-106 (AIFV…DFIL), 108-128 (VLFT…AIVV), 158-178 (IALV…LLVG), 184-204 (AAEF…VVSL), 218-238 (LIAA…KWLV), and 246-266 (FTVF…YFSL).

Belongs to the UppP family.

It is found in the cell inner membrane. The catalysed reaction is di-trans,octa-cis-undecaprenyl diphosphate + H2O = di-trans,octa-cis-undecaprenyl phosphate + phosphate + H(+). In terms of biological role, catalyzes the dephosphorylation of undecaprenyl diphosphate (UPP). Confers resistance to bacitracin. This chain is Undecaprenyl-diphosphatase, found in Parvibaculum lavamentivorans (strain DS-1 / DSM 13023 / NCIMB 13966).